Reading from the N-terminus, the 278-residue chain is Large ribosomal subunit protein uL2 (278 aa).

Disordered regions lie at residues 1-58 (MAIR…GGGH) and 224-278 (VVMN…GKKR). The span at 23–33 (EITRDHPEKSL) shows a compositional bias: basic and acidic residues. Residues 37–58 (LHGRGGRNAHGRITTRHKGGGH) show a composition bias toward basic residues. Residues 253-268 (PEGRTRKPKKASDKLI) are compositionally biased toward basic and acidic residues. The segment covering 269-278 (VRRRRTGKKR) has biased composition (basic residues).

It belongs to the universal ribosomal protein uL2 family. Part of the 50S ribosomal subunit. Forms a bridge to the 30S subunit in the 70S ribosome.

In terms of biological role, one of the primary rRNA binding proteins. Required for association of the 30S and 50S subunits to form the 70S ribosome, for tRNA binding and peptide bond formation. It has been suggested to have peptidyltransferase activity; this is somewhat controversial. Makes several contacts with the 16S rRNA in the 70S ribosome. The protein is Large ribosomal subunit protein uL2 of Mycolicibacterium vanbaalenii (strain DSM 7251 / JCM 13017 / BCRC 16820 / KCTC 9966 / NRRL B-24157 / PYR-1) (Mycobacterium vanbaalenii).